Here is a 156-residue protein sequence, read N- to C-terminus: MNFNATLIGQTVAFIIFVWFCMKFVWPPLMNAIEARQKRIADGLADADRAVKDLELAQAKATDQLKEAKATANEIIEQANKRKAQIVEEAKAEADAERAKIIAQGKAEIEAERNRVKEDLRKQVATLAIMGAEKILERSIDPAAHSDIVNKLVAEI.

The chain crosses the membrane as a helical span at residues 7-27 (LIGQTVAFIIFVWFCMKFVWP).

It belongs to the ATPase B chain family. F-type ATPases have 2 components, F(1) - the catalytic core - and F(0) - the membrane proton channel. F(1) has five subunits: alpha(3), beta(3), gamma(1), delta(1), epsilon(1). F(0) has three main subunits: a(1), b(2) and c(10-14). The alpha and beta chains form an alternating ring which encloses part of the gamma chain. F(1) is attached to F(0) by a central stalk formed by the gamma and epsilon chains, while a peripheral stalk is formed by the delta and b chains.

It localises to the cell inner membrane. Functionally, f(1)F(0) ATP synthase produces ATP from ADP in the presence of a proton or sodium gradient. F-type ATPases consist of two structural domains, F(1) containing the extramembraneous catalytic core and F(0) containing the membrane proton channel, linked together by a central stalk and a peripheral stalk. During catalysis, ATP synthesis in the catalytic domain of F(1) is coupled via a rotary mechanism of the central stalk subunits to proton translocation. In terms of biological role, component of the F(0) channel, it forms part of the peripheral stalk, linking F(1) to F(0). The polypeptide is ATP synthase subunit b (Shewanella sp. (strain ANA-3)).